The sequence spans 201 residues: Superoxide dismutase [Mn/Fe] (201 aa).

Residues His-27, His-81, Asp-162, and His-166 each coordinate Fe(3+). Mn(2+)-binding residues include His-27, His-81, Asp-162, and His-166.

It belongs to the iron/manganese superoxide dismutase family. As to quaternary structure, homodimer. Mn(2+) is required as a cofactor. Requires Fe(3+) as cofactor.

It carries out the reaction 2 superoxide + 2 H(+) = H2O2 + O2. Functionally, destroys superoxide anion radicals which are normally produced within the cells and which are toxic to biological systems. Catalyzes the dismutation of superoxide anion radicals into O2 and H2O2 by successive reduction and oxidation of the transition metal ion at the active site. In Staphylococcus carnosus, this protein is Superoxide dismutase [Mn/Fe] (sodA).